The sequence spans 274 residues: Diaminopimelate epimerase (274 aa).

Positions 11, 44, and 64 each coordinate substrate. C73 functions as the Proton donor in the catalytic mechanism. Substrate-binding positions include 74–75 (GN), N157, N190, and 208–209 (ER). C217 acts as the Proton acceptor in catalysis. A substrate-binding site is contributed by 218 to 219 (GS).

The protein belongs to the diaminopimelate epimerase family. As to quaternary structure, homodimer.

The protein resides in the cytoplasm. The enzyme catalyses (2S,6S)-2,6-diaminopimelate = meso-2,6-diaminopimelate. It participates in amino-acid biosynthesis; L-lysine biosynthesis via DAP pathway; DL-2,6-diaminopimelate from LL-2,6-diaminopimelate: step 1/1. In terms of biological role, catalyzes the stereoinversion of LL-2,6-diaminopimelate (L,L-DAP) to meso-diaminopimelate (meso-DAP), a precursor of L-lysine and an essential component of the bacterial peptidoglycan. This is Diaminopimelate epimerase from Cronobacter sakazakii (strain ATCC BAA-894) (Enterobacter sakazakii).